A 282-amino-acid polypeptide reads, in one-letter code: Bifunctional protein FolD (282 aa).

NADP(+) contacts are provided by residues 165–167 (NRS), serine 190, and isoleucine 231.

Belongs to the tetrahydrofolate dehydrogenase/cyclohydrolase family. Homodimer.

The enzyme catalyses (6R)-5,10-methylene-5,6,7,8-tetrahydrofolate + NADP(+) = (6R)-5,10-methenyltetrahydrofolate + NADPH. The catalysed reaction is (6R)-5,10-methenyltetrahydrofolate + H2O = (6R)-10-formyltetrahydrofolate + H(+). Its pathway is one-carbon metabolism; tetrahydrofolate interconversion. Catalyzes the oxidation of 5,10-methylenetetrahydrofolate to 5,10-methenyltetrahydrofolate and then the hydrolysis of 5,10-methenyltetrahydrofolate to 10-formyltetrahydrofolate. This Clostridium botulinum (strain Okra / Type B1) protein is Bifunctional protein FolD.